Here is a 382-residue protein sequence, read N- to C-terminus: Chaperone protein DnaJ (382 aa).

One can recognise a J domain in the interval 5-70; that stretch reads DYYELLGVQK…EKRAAYDRYG (66 aa). Residues 146-224 form a CR-type zinc finger; that stretch reads GAEKEISFRK…CHGEGRVRRT (79 aa). Zn(2+) contacts are provided by cysteine 159, cysteine 162, cysteine 176, cysteine 179, cysteine 198, cysteine 201, cysteine 212, and cysteine 215. CXXCXGXG motif repeat units follow at residues 159-166, 176-183, 198-205, and 212-219; these read CERCDGSG, CPTCRGAG, CPTCGGMG, and CTVCHGEG. Residues 230–250 form a disordered region; that stretch reads RIPPGVDNGSRLRSSGNGEAG.

Belongs to the DnaJ family. Homodimer. It depends on Zn(2+) as a cofactor.

Its subcellular location is the cytoplasm. Functionally, participates actively in the response to hyperosmotic and heat shock by preventing the aggregation of stress-denatured proteins and by disaggregating proteins, also in an autonomous, DnaK-independent fashion. Unfolded proteins bind initially to DnaJ; upon interaction with the DnaJ-bound protein, DnaK hydrolyzes its bound ATP, resulting in the formation of a stable complex. GrpE releases ADP from DnaK; ATP binding to DnaK triggers the release of the substrate protein, thus completing the reaction cycle. Several rounds of ATP-dependent interactions between DnaJ, DnaK and GrpE are required for fully efficient folding. Also involved, together with DnaK and GrpE, in the DNA replication of plasmids through activation of initiation proteins. This Opitutus terrae (strain DSM 11246 / JCM 15787 / PB90-1) protein is Chaperone protein DnaJ.